The sequence spans 116 residues: Large ribosomal subunit protein bL20 (116 aa).

It belongs to the bacterial ribosomal protein bL20 family.

Functionally, binds directly to 23S ribosomal RNA and is necessary for the in vitro assembly process of the 50S ribosomal subunit. It is not involved in the protein synthesizing functions of that subunit. This Helicobacter acinonychis (strain Sheeba) protein is Large ribosomal subunit protein bL20.